We begin with the raw amino-acid sequence, 341 residues long: MQVALVGVTGYSGMVLYRLLKQHPEIDRIQLYGHVGATTVALKTVAAMYQKETAVIRPFDATAIMRDNAIVFFATSAGITRQLALPFIAAHFPVIDLSGDFRLHDPEQYQRWYQRDPASATALAQASYGLADMPAPLSTYIANPGCYATATLLGLAPLAQQQLVEPTSIVVDAKSGLSGAGKRATAASHYVAVNDNLSLYKLNQHQHIPEMMQQLQQWWSAISAIEFTTTLIPVTRGIMTTIYAKAKSALTTTQVRAAFTATYHEQPFVQVLPTGMPTLKDVVGSNNCALGVDYNPVTNTIVVVSVIDNLMKGAAGQAVQNFNRYFDFAVTAGLPTLPVFP.

Residue Cys146 is part of the active site.

This sequence belongs to the NAGSA dehydrogenase family. Type 1 subfamily.

It localises to the cytoplasm. The enzyme catalyses N-acetyl-L-glutamate 5-semialdehyde + phosphate + NADP(+) = N-acetyl-L-glutamyl 5-phosphate + NADPH + H(+). It participates in amino-acid biosynthesis; L-arginine biosynthesis; N(2)-acetyl-L-ornithine from L-glutamate: step 3/4. In terms of biological role, catalyzes the NADPH-dependent reduction of N-acetyl-5-glutamyl phosphate to yield N-acetyl-L-glutamate 5-semialdehyde. The polypeptide is N-acetyl-gamma-glutamyl-phosphate reductase 2 (Lactiplantibacillus plantarum (strain ATCC BAA-793 / NCIMB 8826 / WCFS1) (Lactobacillus plantarum)).